A 118-amino-acid chain; its full sequence is Large ribosomal subunit protein bL20 (118 aa).

This sequence belongs to the bacterial ribosomal protein bL20 family.

Its function is as follows. Binds directly to 23S ribosomal RNA and is necessary for the in vitro assembly process of the 50S ribosomal subunit. It is not involved in the protein synthesizing functions of that subunit. In Macrococcus caseolyticus (strain JCSC5402) (Macrococcoides caseolyticum), this protein is Large ribosomal subunit protein bL20.